We begin with the raw amino-acid sequence, 389 residues long: MEKAIRNFLSQESAGGILLLVAVALAMLMANSPLSGLYQGFLGTDVQVKIGELDIHKPLILWINDGLMAVFFLLIGLEVKRELLEGALSSVAQASLPTFAAIGGMLVPAGVYLLFNYGDPVTQAGWAIPAATDIAFALGIMALLGSRVPVSLKVFLLALAIIDDLGVIVIIALFYSTDLSTISLVIASLAIAGLVGLNRKGVTSLLPYGILGLILWVAVLKSGVHATLAGVIIAFCIPLRAKDGSSPSEGLEHSLHPWSTFFILPVFAFANAGVYVGNMNLETLISPVPVGIALGLMLGKPIGVMVFSYIAVKLKLAQLPDGIGWKQIAPVAAMCGIGFTMSMFIASLAFEHADPMYGDLARLGTLIGSIMAALVGYFWLSKVLPNKGV.

11 helical membrane-spanning segments follow: residues 14 to 34, 59 to 79, 95 to 115, 124 to 144, 154 to 174, 177 to 197, 213 to 233, 257 to 277, 292 to 312, 328 to 348, and 363 to 383; these read AGGILLLVAVALAMLMANSPL, LILWINDGLMAVFFLLIGLEV, SLPTFAAIGGMLVPAGVYLLF, AGWAIPAATDIAFALGIMALL, VFLLALAIIDDLGVIVIIALF, TDLSTISLVIASLAIAGLVGL, LILWVAVLKSGVHATLAGVII, PWSTFFILPVFAFANAGVYVG, IALGLMLGKPIGVMVFSYIAV, IAPVAAMCGIGFTMSMFIASL, and LGTLIGSIMAALVGYFWLSKV.

It belongs to the NhaA Na(+)/H(+) (TC 2.A.33) antiporter family.

The protein localises to the cell inner membrane. The enzyme catalyses Na(+)(in) + 2 H(+)(out) = Na(+)(out) + 2 H(+)(in). In terms of biological role, na(+)/H(+) antiporter that extrudes sodium in exchange for external protons. This chain is Na(+)/H(+) antiporter NhaA, found in Shewanella baltica (strain OS195).